The primary structure comprises 352 residues: C-X-C chemokine receptor type 4 (352 aa).

Residues 1–21 (MEGISIYTSDNYTEEMGSGDY) form an important for chemokine binding and signaling region. Residues 1–38 (MEGISIYTSDNYTEEMGSGDYDSIKEPCFREKNAHFNR) lie on the Extracellular side of the membrane. Tyr7 is subject to Sulfotyrosine. Asn11 carries N-linked (GlcNAc...) asparagine glycosylation. Tyr12 bears the Sulfotyrosine mark. The O-linked (Xyl...) (chondroitin sulfate) serine glycan is linked to Ser18. Sulfotyrosine is present on Tyr21. Disulfide bonds link Cys28/Cys274 and Cys109/Cys186. Residues 39-63 (IFLPTIYSIIFLTGIVGNGLVILVM) form a helical membrane-spanning segment. Over 64-77 (GYQKKLRSMTDKYR) the chain is Cytoplasmic. Residues 78 to 99 (LHLSVADLLFVITLPFWAVDAV) form a helical membrane-spanning segment. The segment at 94–97 (WAVD) is chemokine binding. Residues 100 to 110 (ANWYFGNFLCK) are Extracellular-facing. The helical transmembrane segment at 111–130 (AVHVIYTVNLYSSVLILAFI) threads the bilayer. The tract at residues 113–117 (HVIYT) is chemokine binding. Over 131 to 154 (SLDRYLAIVHATNSQKPRKLLAEK) the chain is Cytoplasmic. Positions 133–135 (DRY) match the Important for signaling motif. The tract at residues 135 to 147 (YLAIVHATNSQKP) is involved in dimerization; when bound to chemokine. A helical membrane pass occupies residues 155–174 (VVYVGVWIPALLLTIPGFIF). At 175–195 (ASVSEADDRFICDRFYPNDLW) the chain is on the extracellular side. A chemokine binding, important for signaling region spans residues 186 to 190 (CDRFY). The interval 191–210 (PNDLWVVVFQFQHIMVGLIL) is involved in dimerization. Residues 196–216 (VVVFQFQHIMVGLILPGIVIL) form a helical membrane-spanning segment. Over 217–241 (SCYCIIISKLSHSKGHQKRKALKTT) the chain is Cytoplasmic. The chain crosses the membrane as a helical span at residues 242–261 (VILILAFFACWLPYYIGISI). Over 262-282 (DSFILLEIIKQGCEFENTVHK) the chain is Extracellular. An involved in dimerization region spans residues 266–268 (LLE). Residues 283 to 302 (WISITEALAFFHCCLNPILY) form a helical membrane-spanning segment. Residues 303–352 (AFLGAKFKTSAQHALTSVSRGSSLKILSKGKRGGHSSVSTESESSSFHSS) lie on the Cytoplasmic side of the membrane. Phosphoserine occurs at positions 319 and 321. Phosphoserine; by PKC and GRK6 is present on residues Ser324 and Ser325. The segment at 329–352 (LSKGKRGGHSSVSTESESSSFHSS) is disordered. Ser330 carries the phosphoserine; by GRK6 modification. Residue Lys331 forms a Glycyl lysine isopeptide (Lys-Gly) (interchain with G-Cter in ubiquitin) linkage. Residues 337–352 (HSSVSTESESSSFHSS) show a composition bias toward low complexity. Ser339 carries the phosphoserine; by GRK6 modification. Residues Ser348 and Ser351 each carry the phosphoserine modification.

The protein belongs to the G-protein coupled receptor 1 family. In terms of assembly, monomer. Can form homodimers. Interacts with CD164. Interacts with ARRB2; the interaction is dependent on the C-terminal phosphorylation of CXCR4 and allows activation of MAPK1 and MAPK3. Interacts with ARR3; the interaction is dependent on the C-terminal phosphorylation of CXCR4 and modulates calcium mobilization. Interacts with RNF113A; the interaction, enhanced by CXCL12, promotes CXCR4 ubiquitination and subsequent degradation. Interacts (via the cytoplasmic C-terminal) with ITCH (via the WW domains I and II); the interaction, enhanced by CXCL12, promotes CXCR4 ubiquitination and leads to its degradation. Interacts with extracellular ubiquitin. Interacts with DBN1; this interaction is enhanced by antigenic stimulation. Following LPS binding, may form a complex with GDF5, HSP90AA1 and HSPA8. Phosphorylated on agonist stimulation. Rapidly phosphorylated on serine and threonine residues in the C-terminal. Phosphorylation at Ser-324 and Ser-325 leads to recruitment of ITCH, ubiquitination and protein degradation. In terms of processing, ubiquitinated after ligand binding, leading to its degradation. Ubiquitinated by ITCH at the cell membrane on agonist stimulation. The ubiquitin-dependent mechanism, endosomal sorting complex required for transport (ESCRT), then targets CXCR4 for lysosomal degradation. This process is dependent also on prior Ser-/Thr-phosphorylation in the C-terminal of CXCR4. Also binding of ARRB1 to STAM negatively regulates CXCR4 sorting to lysosomes though modulating ubiquitination of SFR5S. Post-translationally, sulfation is required for efficient binding of CXCL12/SDF-1alpha and promotes its dimerization. O- and N-glycosylated. N-glycosylation can mask coreceptor function. The O-glycosylation chondroitin sulfate attachment does not affect interaction with CXCL12/SDF-1alpha nor its coreceptor activity.

The protein localises to the cell membrane. The protein resides in the cell junction. It is found in the early endosome. Its subcellular location is the late endosome. It localises to the lysosome. In terms of biological role, receptor for the C-X-C chemokine CXCL12/SDF-1 that transduces a signal by increasing intracellular calcium ion levels and enhancing MAPK1/MAPK3 activation. Involved in the AKT signaling cascade. Plays a role in regulation of cell migration, e.g. during wound healing. Acts as a receptor for extracellular ubiquitin; leading to enhanced intracellular calcium ions and reduced cellular cAMP levels. Binds bacterial lipopolysaccharide (LPS) et mediates LPS-induced inflammatory response, including TNF secretion by monocytes. Involved in hematopoiesis and in cardiac ventricular septum formation. Also plays an essential role in vascularization of the gastrointestinal tract, probably by regulating vascular branching and/or remodeling processes in endothelial cells. Involved in cerebellar development. In the CNS, could mediate hippocampal-neuron survival. This Cercocebus atys (Sooty mangabey) protein is C-X-C chemokine receptor type 4 (CXCR4).